A 274-amino-acid polypeptide reads, in one-letter code: MSYSALEAAIEAAWEARETITPATKGETREAIEATLEALDKGSLRVAEKRGADWHVNQWAKKAVLLGFRLKDMEVQTGGPQAGTWWDKVDSKFAQWGEAQWKAAGFRAVPNCVVRRSAYIARGVVLMPSFVNLGAYVDEGTMVDTWATVGSCAQIGKNVHLSGGVGIGGVLEPMQAGPTIIEDNCFIGARSEVVEGCIVREGSVLGMGVFIGKSTKIVDRETGEVMYGEVPAGSVVVAGSMPSKGGVNLYCAVIVKRVDAQTRSKTSINELLRD.

Positions 107 and 144 each coordinate substrate.

The protein belongs to the transferase hexapeptide repeat family. In terms of assembly, homotrimer.

Its subcellular location is the cytoplasm. The catalysed reaction is (S)-2,3,4,5-tetrahydrodipicolinate + succinyl-CoA + H2O = (S)-2-succinylamino-6-oxoheptanedioate + CoA. It participates in amino-acid biosynthesis; L-lysine biosynthesis via DAP pathway; LL-2,6-diaminopimelate from (S)-tetrahydrodipicolinate (succinylase route): step 1/3. This Cereibacter sphaeroides (strain ATCC 17023 / DSM 158 / JCM 6121 / CCUG 31486 / LMG 2827 / NBRC 12203 / NCIMB 8253 / ATH 2.4.1.) (Rhodobacter sphaeroides) protein is 2,3,4,5-tetrahydropyridine-2,6-dicarboxylate N-succinyltransferase.